Here is a 35-residue protein sequence, read N- to C-terminus: Peptide ToHyp2 (35 aa).

Over residues 1–29 (LPKPPLLPPPVPGLAPGLPPLPVPDPVPH) the composition is skewed to pro residues. A disordered region spans residues 1 to 35 (LPKPPLLPPPVPGLAPGLPPLPVPDPVPHPPKKPP). Residues proline 5, proline 9, proline 10, proline 12, proline 16, proline 20, proline 31, and proline 35 each carry the hydroxyproline modification.

In terms of processing, O-glycosylated; contains pentose side chains at some or all of the hydroxyproline residues. Glycosylation is required for full antifungal activity.

In terms of biological role, antimicrobial peptide. Inhibits elongation of hyphae in B.sorokiniana (IC(50)=3.8 uM) but has no effect on this process or on germination of conidia in a panel of other phytopathogenic fungi. At concentrations above 10 uM, has antibacterial activity. The polypeptide is Peptide ToHyp2 (Taraxacum officinale (Common dandelion)).